A 1205-amino-acid chain; its full sequence is A disintegrin and metalloproteinase with thrombospondin motifs 3 (1205 aa).

A signal peptide spans 1-20 (MVLLSLWLIAAALVEVRTSA). A propeptide spanning residues 21 to 249 (DGQAGNEEMV…QLNETMRRRR (229 aa)) is cleaved from the precursor. Asn-83, Asn-119, Asn-242, and Asn-345 each carry an N-linked (GlcNAc...) asparagine glycan. The Peptidase M12B domain maps to 256–460 (YNIEVLLGVD…HSYDCLLDDP (205 aa)). Cystine bridges form between Cys-333/Cys-382, Cys-376/Cys-455, and Cys-415/Cys-441. His-398 contacts Zn(2+). Glu-399 is a catalytic residue. 2 residues coordinate Zn(2+): His-402 and His-408. Positions 470-550 (ELPGINYSMD…MWKNANQQKQ (81 aa)) constitute a Disintegrin domain. The N-linked (GlcNAc...) asparagine glycan is linked to Asn-475. Intrachain disulfides connect Cys-482-Cys-507, Cys-493-Cys-516, Cys-502-Cys-535, Cys-529-Cys-540, Cys-563-Cys-600, Cys-567-Cys-605, and Cys-578-Cys-590. Residues 551-606 (DGNWGSWTKFGSCSRTCGTGVRFRTRQCNNPMPINGGQDCPGVNFEYQLCNTEECQ) form the TSP type-1 1 domain. The spacer stretch occupies residues 713 to 844 (RTVKGTFTRT…NSNNVIQEEL (132 aa)). The N-linked (GlcNAc...) asparagine glycan is linked to Asn-814. TSP type-1 domains are found at residues 845 to 905 (DTFE…QECT), 906 to 965 (HPLW…NRVP), and 966 to 1014 (CPAQ…QLPP). Residue Asn-942 is glycosylated (N-linked (GlcNAc...) asparagine). Disulfide bonds link Cys-978–Cys-1010, Cys-982–Cys-1015, and Cys-993–Cys-999. A PLAC domain is found at 1015–1054 (CNDEPCLGDKSIFCQMEVLARYCSIPGYNKLCCESCSKRS). Positions 1174 to 1205 (DSIGASSQARTSKKDGKIIDNRRPTRSSTLER) are disordered. A compositionally biased stretch (basic and acidic residues) spans 1185–1205 (SKKDGKIIDNRRPTRSSTLER).

The cofactor is Zn(2+). In terms of processing, the precursor is cleaved by a furin endopeptidase. Post-translationally, glycosylated. Can be O-fucosylated by POFUT2 on a serine or a threonine residue found within the consensus sequence C1-X(2)-(S/T)-C2-G of the TSP type-1 repeat domains where C1 and C2 are the first and second cysteine residue of the repeat, respectively. Fucosylated repeats can then be further glycosylated by the addition of a beta-1,3-glucose residue by the glucosyltransferase, B3GALTL. Fucosylation mediates the efficient secretion of ADAMTS family members. Can also be C-glycosylated with one or two mannose molecules on tryptophan residues within the consensus sequence W-X-X-W of the TPRs, and N-glycosylated. These other glycosylations can also facilitate secretion. In terms of tissue distribution, found in cartilage and skin.

The protein localises to the secreted. The protein resides in the extracellular space. Its subcellular location is the extracellular matrix. Functionally, cleaves the propeptides of type II collagen prior to fibril assembly. Does not act on types I and III collagens. This chain is A disintegrin and metalloproteinase with thrombospondin motifs 3 (ADAMTS3), found in Homo sapiens (Human).